Reading from the N-terminus, the 544-residue chain is Chaperonin GroEL (544 aa).

Residues 30–33, Lys-51, 87–91, Gly-415, 481–483, and Asp-497 contribute to the ATP site; these read TLGP, DGTTT, and DAL.

This sequence belongs to the chaperonin (HSP60) family. Forms a cylinder of 14 subunits composed of two heptameric rings stacked back-to-back. Interacts with the co-chaperonin GroES.

It localises to the cytoplasm. It carries out the reaction ATP + H2O + a folded polypeptide = ADP + phosphate + an unfolded polypeptide.. In terms of biological role, together with its co-chaperonin GroES, plays an essential role in assisting protein folding. The GroEL-GroES system forms a nano-cage that allows encapsulation of the non-native substrate proteins and provides a physical environment optimized to promote and accelerate protein folding. The sequence is that of Chaperonin GroEL from Chlamydia trachomatis serovar L2 (strain ATCC VR-902B / DSM 19102 / 434/Bu).